We begin with the raw amino-acid sequence, 402 residues long: NADH dehydrogenase [ubiquinone] 1 alpha subcomplex subunit 9, mitochondrial (402 aa).

Residues 1 to 43 constitute a mitochondrion transit peptide; sequence MQVVSRRLVQRPLVGGASIYSSSSLRSLYGVSNHLNGTDNCRY.

This sequence belongs to the complex I NDUFA9 subunit family. Complex I is composed of at least 49 different subunits. This a component of the hydrophobic protein fraction. FAD serves as cofactor.

It localises to the mitochondrion matrix. Its function is as follows. Accessory subunit of the mitochondrial membrane respiratory chain NADH dehydrogenase (Complex I), that is believed not to be involved in catalysis. Complex I functions in the transfer of electrons from NADH to the respiratory chain. The immediate electron acceptor for the enzyme is believed to be ubiquinone. This chain is NADH dehydrogenase [ubiquinone] 1 alpha subcomplex subunit 9, mitochondrial, found in Arabidopsis thaliana (Mouse-ear cress).